We begin with the raw amino-acid sequence, 156 residues long: Small ribosomal subunit protein uS7 (156 aa).

The protein belongs to the universal ribosomal protein uS7 family. As to quaternary structure, part of the 30S ribosomal subunit. Contacts proteins S9 and S11.

Functionally, one of the primary rRNA binding proteins, it binds directly to 16S rRNA where it nucleates assembly of the head domain of the 30S subunit. Is located at the subunit interface close to the decoding center, probably blocks exit of the E-site tRNA. The sequence is that of Small ribosomal subunit protein uS7 from Nitrosomonas eutropha (strain DSM 101675 / C91 / Nm57).